The primary structure comprises 135 residues: Photosystem II extrinsic protein U (135 aa).

A signal peptide spans 1 to 29 (MKRLLSWLTGALLMAGLLAGLILPGSVHA).

This sequence belongs to the PsbU family. PSII is composed of 1 copy each of membrane proteins PsbA, PsbB, PsbC, PsbD, PsbE, PsbF, PsbH, PsbI, PsbJ, PsbK, PsbL, PsbM, PsbT, PsbX, PsbY, Psb30/Ycf12, peripheral proteins PsbO, CyanoQ (PsbQ), PsbU, PsbV and a large number of cofactors. It forms dimeric complexes.

It is found in the cellular thylakoid membrane. In terms of biological role, one of the extrinsic, lumenal subunits of photosystem II (PSII). PSII is a light-driven water plastoquinone oxidoreductase, using light energy to abstract electrons from H(2)O, generating a proton gradient subsequently used for ATP formation. The extrinsic proteins stabilize the structure of photosystem II oxygen-evolving complex (OEC), the ion environment of oxygen evolution and protect the OEC against heat-induced inactivation. In Parasynechococcus marenigrum (strain WH8102), this protein is Photosystem II extrinsic protein U.